The chain runs to 585 residues: Membrane protein insertase YidC (585 aa).

A run of 6 helical transmembrane segments spans residues 5-25 (SVTG…FMSP), 338-358 (FGWD…AFTW), 362-382 (FVSN…LVTY), 432-452 (LGGC…FYVF), 482-502 (IPMY…TVFL), and 518-538 (IMLY…PSGL).

This sequence belongs to the OXA1/ALB3/YidC family. Type 1 subfamily. In terms of assembly, interacts with the Sec translocase complex via SecD. Specifically interacts with transmembrane segments of nascent integral membrane proteins during membrane integration.

The protein resides in the cell inner membrane. In terms of biological role, required for the insertion and/or proper folding and/or complex formation of integral membrane proteins into the membrane. Involved in integration of membrane proteins that insert both dependently and independently of the Sec translocase complex, as well as at least some lipoproteins. Aids folding of multispanning membrane proteins. In Chlorobium luteolum (strain DSM 273 / BCRC 81028 / 2530) (Pelodictyon luteolum), this protein is Membrane protein insertase YidC.